We begin with the raw amino-acid sequence, 171 residues long: Small ribosomal subunit protein uS13 (171 aa).

A compositionally biased stretch (polar residues) spans 1–11 (MAKGSANNVKV). Disordered regions lie at residues 1–24 (MAKG…EKKE) and 144–164 (EKGK…GLSI). The span at 144–158 (EKGKKVRGQRTRSNG) shows a compositional bias: basic residues.

It belongs to the universal ribosomal protein uS13 family. In terms of assembly, part of the 30S ribosomal subunit. Forms a loose heterodimer with protein S19. Forms two bridges to the 50S subunit in the 70S ribosome.

Its function is as follows. Located at the top of the head of the 30S subunit, it contacts several helices of the 16S rRNA. In the 70S ribosome it contacts the 23S rRNA (bridge B1a) and protein L5 of the 50S subunit (bridge B1b), connecting the 2 subunits; these bridges are implicated in subunit movement. This is Small ribosomal subunit protein uS13 from Thermoplasma acidophilum (strain ATCC 25905 / DSM 1728 / JCM 9062 / NBRC 15155 / AMRC-C165).